The primary structure comprises 100 residues: Nucleoid-associated protein ckrop_0143 (100 aa).

Belongs to the YbaB/EbfC family. As to quaternary structure, homodimer.

The protein resides in the cytoplasm. The protein localises to the nucleoid. Functionally, binds to DNA and alters its conformation. May be involved in regulation of gene expression, nucleoid organization and DNA protection. The chain is Nucleoid-associated protein ckrop_0143 from Corynebacterium kroppenstedtii (strain DSM 44385 / JCM 11950 / CIP 105744 / CCUG 35717).